A 333-amino-acid chain; its full sequence is D-alanine--D-alanine ligase (333 aa).

The region spanning 124–329 (KMWFSALGIP…FTEYLYSNIK (206 aa)) is the ATP-grasp domain. Position 154–209 (154–209 (ALETWGSVFIKAASQGSSVGCYRVDSIDELASSLKEAFSYSPYVVVEKTIHARELE)) interacts with ATP. Positions 283, 296, and 298 each coordinate Mg(2+).

This sequence belongs to the D-alanine--D-alanine ligase family. It depends on Mg(2+) as a cofactor. Mn(2+) is required as a cofactor.

Its subcellular location is the cytoplasm. The enzyme catalyses 2 D-alanine + ATP = D-alanyl-D-alanine + ADP + phosphate + H(+). Its pathway is cell wall biogenesis; peptidoglycan biosynthesis. Cell wall formation. In Shewanella sediminis (strain HAW-EB3), this protein is D-alanine--D-alanine ligase.